The sequence spans 673 residues: Capsid protein (673 aa).

Residues 575–595 (NLPTDSSLESDSDSEPAPKKK) are disordered.

This sequence belongs to the anelloviridae capsid protein family.

It localises to the virion. Functionally, self-assembles to form an icosahedral capsid with a T=1 symmetry, about 30 nm in diameter, and consisting of 60 capsid proteins. The capsid encapsulates the genomic DNA. Capsid protein is involved in attachment and entry into the host cell. In Homo sapiens (Human), this protein is Capsid protein.